The following is a 42-amino-acid chain: Delta-actinopoditoxin-Mb1a (42 aa).

4 disulfide bridges follow: C1-C15, C8-C20, C14-C31, and C16-C42.

Belongs to the neurotoxin 06 (delta-actx) family. In terms of tissue distribution, expressed by the venom gland.

It is found in the secreted. Its function is as follows. Neurotoxin that slows the inactivation of vertebrate tetrodotoxin-sensitive voltage-gated sodium channels (Nav) and most likely insect sodium channels presumably by binding to site 3 of the channel. Effects are an increase in resting tension, a muscle fasciculation and a decrease in indirect twitch tension. It fails to affect tetrodotoxin-resistant sodium currents. In vivo, is lethal to both vertebrates and insects. The protein is Delta-actinopoditoxin-Mb1a of Missulena bradleyi (Eastern mouse spider).